The primary structure comprises 345 residues: NADH-ubiquinone oxidoreductase chain 2 (345 aa).

The next 10 helical transmembrane spans lie at 3-23, 25-45, 59-79, 95-115, 148-168, 177-196, 201-223, 236-256, 273-293, and 322-342; these read PYIL…TFAS, NWLL…PLMA, YFIT…INAW, ALMT…FWLP, LMPE…GWGG, IMAY…MHFM, IINL…TLNS, FPAL…LPPL, NLAL…YFYL, and FILP…PSII.

Belongs to the complex I subunit 2 family.

Its subcellular location is the mitochondrion inner membrane. It catalyses the reaction a ubiquinone + NADH + 5 H(+)(in) = a ubiquinol + NAD(+) + 4 H(+)(out). Its function is as follows. Core subunit of the mitochondrial membrane respiratory chain NADH dehydrogenase (Complex I) that is believed to belong to the minimal assembly required for catalysis. Complex I functions in the transfer of electrons from NADH to the respiratory chain. The immediate electron acceptor for the enzyme is believed to be ubiquinone. This chain is NADH-ubiquinone oxidoreductase chain 2 (MT-ND2), found in Polypterus ornatipinnis (Ornate bichir).